Reading from the N-terminus, the 258-residue chain is Ribosomal RNA small subunit methyltransferase A (258 aa).

The S-adenosyl-L-methionine site is built by histidine 13, leucine 15, glycine 41, aspartate 63, aspartate 87, and asparagine 106.

This sequence belongs to the class I-like SAM-binding methyltransferase superfamily. rRNA adenine N(6)-methyltransferase family. RsmA subfamily.

It is found in the cytoplasm. The enzyme catalyses adenosine(1518)/adenosine(1519) in 16S rRNA + 4 S-adenosyl-L-methionine = N(6)-dimethyladenosine(1518)/N(6)-dimethyladenosine(1519) in 16S rRNA + 4 S-adenosyl-L-homocysteine + 4 H(+). Specifically dimethylates two adjacent adenosines (A1518 and A1519) in the loop of a conserved hairpin near the 3'-end of 16S rRNA in the 30S particle. May play a critical role in biogenesis of 30S subunits. In Cytophaga hutchinsonii (strain ATCC 33406 / DSM 1761 / CIP 103989 / NBRC 15051 / NCIMB 9469 / D465), this protein is Ribosomal RNA small subunit methyltransferase A.